Consider the following 301-residue polypeptide: Acetylglutamate kinase (301 aa).

Substrate contacts are provided by residues 68 to 69 (GG), R90, and N195.

This sequence belongs to the acetylglutamate kinase family. ArgB subfamily.

The protein localises to the cytoplasm. The enzyme catalyses N-acetyl-L-glutamate + ATP = N-acetyl-L-glutamyl 5-phosphate + ADP. Its pathway is amino-acid biosynthesis; L-arginine biosynthesis; N(2)-acetyl-L-ornithine from L-glutamate: step 2/4. Functionally, catalyzes the ATP-dependent phosphorylation of N-acetyl-L-glutamate. This is Acetylglutamate kinase from Pseudomonas aeruginosa (strain LESB58).